The primary structure comprises 548 residues: MSDMGGLKNLVANTDYLKAQSLDEKEIKKRRCSLGLPHLGNCTDVRVSVSKGFEDICEQQPIGRACFRQFLSVSSPEYLAAAELLDELNCWNLAEAEAKEEARLNIINKFCKADSKSFLAFLTEDEAEKCKAVSEKDFEEVMMGQVKEATQKFLRGQPFEEYQTSLFFDRFVQWKKFEKQPITDKYFYEFRTLGKGGFGEVCGVQVKTTGQMYACKKLDKKRLKKKSGEKMALLEKKILEMVNSLFIVNLAYAFDTKTHLCLVMTLMSGGDLKYHIFHVGEVGIEMERIIHYTAQITSGILHLHSMDIVYRDMKPENVLLDCQGQCRLSDLGLAVELPNGKTTTQKAGTKGYMAPEILKQEPYRTSVDWWALGCSIYEMVAGRVPFRDHKEKVAKEELLRRTLEDEVKFEHRNFDAPSKDIISLFLKRNIEDRLGSNDDPRKHEFFKSINFPRLEAGLIPPPWEPKANVVYAKDTGDIREFSDVKGVKFDANDEKFFKEFSTGVVPIAWQQEMIDSGLFDELSDPNRKESAAGLEDEEQQKSKSCTLL.

Ser-33 is modified (phosphoserine; by PKA). One can recognise an RGS domain in the interval 53–172; that stretch reads FEDICEQQPI…QTSLFFDRFV (120 aa). One can recognise a Protein kinase domain in the interval 187–446; it reads FYEFRTLGKG…NDDPRKHEFF (260 aa). ATP-binding positions include 193-201 and Lys-216; that span reads LGKGGFGEV. The active-site Proton acceptor is the Asp-312. In terms of domain architecture, AGC-kinase C-terminal spans 447 to 512; the sequence is KSINFPRLEA…GVVPIAWQQE (66 aa). The interval 520–548 is disordered; sequence DELSDPNRKESAAGLEDEEQQKSKSCTLL. A Cysteine methyl ester modification is found at Cys-545. Cys-545 carries S-geranylgeranyl cysteine lipidation. Residues 546-548 constitute a propeptide, removed in mature form; the sequence is TLL.

It belongs to the protein kinase superfamily. AGC Ser/Thr protein kinase family. GPRK subfamily. In terms of processing, phosphorylation at Ser-33 is regulated by light and activated by cAMP. Expressed in the eyes (at protein level). Expressed in the eyes, the pineal gland and in the brain.

The protein localises to the membrane. The enzyme catalyses L-threonyl-[rhodopsin] + ATP = O-phospho-L-threonyl-[rhodopsin] + ADP + H(+). It catalyses the reaction L-seryl-[rhodopsin] + ATP = O-phospho-L-seryl-[rhodopsin] + ADP + H(+). In terms of biological role, retina-specific kinase involved in the shutoff of the photoresponse and adaptation to changing light conditions via cone opsin phosphorylation, including rhodopsin (RHO). This is Rhodopsin kinase grk7-b (grk7b) from Danio rerio (Zebrafish).